A 1585-amino-acid polypeptide reads, in one-letter code: Maestro heat-like repeat-containing protein family member 2B (1585 aa).

HEAT repeat units follow at residues 28 to 65, 228 to 263, 272 to 309, 310 to 346, 405 to 445, 531 to 569, 572 to 611, 662 to 699, 777 to 819, 964 to 1001, 1021 to 1059, 1112 to 1151, 1157 to 1195, 1258 to 1295, and 1363 to 1402; these read VNKE…DMRD, GYAL…AAVL, LRRS…LAHS, NPGE…ADEP, TLNR…LVIG, IGLL…STVL, TMLL…NSTE, ENHL…LTKT, SYKE…LKPQ, HLEV…KFIP, PTCT…HMPV, ASSG…VISM, GLYP…QGEQ, GVIL…EPIL, and CESL…EQDD.

Found in a complex at least composed of MROH2B, PRKACA isoform 2 and TCP11. Interacts with PRKACA. Interacts with TCP11. In terms of processing, constitutively phosphorylated on serine and threonine residues in acrosomal region of the sperm head, midpiece and flagellar regions of noncapacitated spermatozoa. Phosphorylation on tyrosine residues increases upon sperm capacitation within the acrosomal and tail regions in a protein kinase A (PKA)-dependent signaling pathway.

It is found in the cytoplasm. The protein resides in the cytoplasmic vesicle. The protein localises to the secretory vesicle. Its subcellular location is the acrosome. It localises to the cell projection. It is found in the cilium. The protein resides in the flagellum. In terms of biological role, may play a role in the process of sperm capacitation. This chain is Maestro heat-like repeat-containing protein family member 2B, found in Homo sapiens (Human).